A 305-amino-acid chain; its full sequence is Pseudouridine-5'-phosphate glycosidase (305 aa).

The active-site Proton donor is the glutamate 22. Substrate contacts are provided by lysine 84 and valine 104. Position 136 (aspartate 136) interacts with Mn(2+). A substrate-binding site is contributed by 138-140; that stretch reads SAD. Lysine 157 functions as the Nucleophile in the catalytic mechanism.

This sequence belongs to the pseudouridine-5'-phosphate glycosidase family. In terms of assembly, homotrimer. It depends on Mn(2+) as a cofactor.

It catalyses the reaction D-ribose 5-phosphate + uracil = psi-UMP + H2O. In terms of biological role, catalyzes the reversible cleavage of pseudouridine 5'-phosphate (PsiMP) to ribose 5-phosphate and uracil. Functions biologically in the cleavage direction, as part of a pseudouridine degradation pathway. This Chloroflexus aurantiacus (strain ATCC 29364 / DSM 637 / Y-400-fl) protein is Pseudouridine-5'-phosphate glycosidase.